The chain runs to 238 residues: Pyridoxine 5'-phosphate synthase (238 aa).

Asn-7 serves as a coordination point for 3-amino-2-oxopropyl phosphate. 9–10 lines the 1-deoxy-D-xylulose 5-phosphate pocket; that stretch reads DH. Arg-18 contributes to the 3-amino-2-oxopropyl phosphate binding site. Residue His-43 is the Proton acceptor of the active site. 2 residues coordinate 1-deoxy-D-xylulose 5-phosphate: Arg-45 and His-50. Catalysis depends on Glu-70, which acts as the Proton acceptor. Position 100 (Thr-100) interacts with 1-deoxy-D-xylulose 5-phosphate. The active-site Proton donor is His-190. 3-amino-2-oxopropyl phosphate is bound by residues Gly-191 and 212–213; that span reads GH.

This sequence belongs to the PNP synthase family. In terms of assembly, homooctamer; tetramer of dimers.

Its subcellular location is the cytoplasm. It catalyses the reaction 3-amino-2-oxopropyl phosphate + 1-deoxy-D-xylulose 5-phosphate = pyridoxine 5'-phosphate + phosphate + 2 H2O + H(+). It participates in cofactor biosynthesis; pyridoxine 5'-phosphate biosynthesis; pyridoxine 5'-phosphate from D-erythrose 4-phosphate: step 5/5. Its function is as follows. Catalyzes the complicated ring closure reaction between the two acyclic compounds 1-deoxy-D-xylulose-5-phosphate (DXP) and 3-amino-2-oxopropyl phosphate (1-amino-acetone-3-phosphate or AAP) to form pyridoxine 5'-phosphate (PNP) and inorganic phosphate. The polypeptide is Pyridoxine 5'-phosphate synthase (Prochlorococcus marinus subsp. pastoris (strain CCMP1986 / NIES-2087 / MED4)).